The sequence spans 659 residues: Exocyst complex component 5 (659 aa).

A coiled-coil region spans residues 1-58; that stretch reads MRFEEEIGSLQMLCDQFQNKINTLEKQMNEEKKDYVQKLHRLHEKNGEAIDKMKQLDH.

This sequence belongs to the SEC10 family. As to quaternary structure, the exocyst complex is composed of sec-3/exoc1, sec-5/exoc2, sec-6/exoc3, sec-8/exoc4, sec-10/exoc5, sec-15/exoc6, exo-70/exoc7 and exo-84/exoc8.

Its function is as follows. Component of the exocyst complex involved in the docking of exocytic vesicles with fusion sites on the plasma membrane. This Caenorhabditis elegans protein is Exocyst complex component 5 (sec-10).